Reading from the N-terminus, the 518-residue chain is Sensor protein kinase HptS (518 aa).

A run of 2 helical transmembrane segments spans residues 20 to 40 (IFPV…IYIW) and 222 to 242 (GITL…FGFI). The 217-residue stretch at 297 to 513 (EQLIHSIEHT…LICYKIPLSR (217 aa)) folds into the Histidine kinase domain. Residue H325 is modified to Phosphohistidine; by autocatalysis.

In terms of processing, autophosphorylated.

Its subcellular location is the cell membrane. It carries out the reaction ATP + protein L-histidine = ADP + protein N-phospho-L-histidine.. Functionally, member of the two-component regulatory system HptS/HptR that regulates genes involved in hexose phosphate transport system in response to changes in extracellular phosphate sources. May act as a sensor protein kinase which is autophosphorylated at a histidine residue and transfers its phosphate group to the conserved aspartic acid residue in the regulatory domain of HptS. In turn, HptS antagonizes CcpA-dependent transcription of a subset of CcpA-regulated genes involved in antibiotic susceptibility. The polypeptide is Sensor protein kinase HptS (hptS) (Staphylococcus aureus (strain MSSA476)).